Reading from the N-terminus, the 886-residue chain is DNA mismatch repair protein MutS (886 aa).

641-648 (GPNMAGKS) serves as a coordination point for ATP.

This sequence belongs to the DNA mismatch repair MutS family.

Its function is as follows. This protein is involved in the repair of mismatches in DNA. It is possible that it carries out the mismatch recognition step. This protein has a weak ATPase activity. The protein is DNA mismatch repair protein MutS of Rickettsia rickettsii (strain Sheila Smith).